We begin with the raw amino-acid sequence, 266 residues long: Gap junction beta-4 protein (266 aa).

An intramembrane segment occupies 2–13 (NWGFLQGILSGV). Over 14–20 (NKYSTAL) the chain is Cytoplasmic. A helical transmembrane segment spans residues 21–40 (GRIWLSVVFIFRVLVYVVAA). Over 41–73 (EEVWDDDQKDFICNTKQPGCPNVCYDEFFPVSH) the chain is Extracellular. Intrachain disulfides connect C53–C175, C60–C169, and C64–C164. A helical transmembrane segment spans residues 74 to 94 (VRLWALQLILVTCPSLLVVMH). The Cytoplasmic segment spans residues 95–130 (VAYREERERKHRLKHGPNAPALYSNLSKKRGGLWWT). The chain crosses the membrane as a helical span at residues 131–151 (YLLSLIFKAAVDSGFLYIFHC). Residues 152 to 184 (IYKDYDMPRVVACSVTPCPHTVDCYIARPTEKK) lie on the Extracellular side of the membrane. Residues 185-205 (VFTYFMVVTAAICILLNLSEV) traverse the membrane as a helical segment. The Cytoplasmic portion of the chain corresponds to 206 to 266 (VYLVGKRCME…MATVDAGVYP (61 aa)).

This sequence belongs to the connexin family. Beta-type (group I) subfamily. A hemichannel or connexon is composed of a hexamer of connexins. A functional gap junction is formed by the apposition of two hemichannels. Forms heteromeric channels with GJB2. Detected in cochlea (at protein level). Detected in cochlea. Expressed in skin.

The protein resides in the cell membrane. Its subcellular location is the cell junction. It is found in the gap junction. In terms of biological role, structural component of gap junctions. Gap junctions are dodecameric channels that connect the cytoplasm of adjoining cells. They are formed by the docking of two hexameric hemichannels, one from each cell membrane. Small molecules and ions diffuse from one cell to a neighboring cell via the central pore. The polypeptide is Gap junction beta-4 protein (Gjb4) (Mus musculus (Mouse)).